A 396-amino-acid chain; its full sequence is Elongation factor Tu 2 (396 aa).

The tr-type G domain maps to 10–206 (KPHINVGTIG…AMDAHIPQPE (197 aa)). The segment at 19-26 (GHVDHGKT) is G1. Position 19–26 (19–26 (GHVDHGKT)) interacts with GTP. T26 contacts Mg(2+). The tract at residues 60-64 (GITIA) is G2. Positions 81-84 (DCPG) are G3. GTP is bound by residues 81 to 85 (DCPGH) and 136 to 139 (NKAD). The tract at residues 136 to 139 (NKAD) is G4. The tract at residues 174 to 176 (SAL) is G5.

It belongs to the TRAFAC class translation factor GTPase superfamily. Classic translation factor GTPase family. EF-Tu/EF-1A subfamily. In terms of assembly, monomer.

It localises to the cytoplasm. It catalyses the reaction GTP + H2O = GDP + phosphate + H(+). Functionally, GTP hydrolase that promotes the GTP-dependent binding of aminoacyl-tRNA to the A-site of ribosomes during protein biosynthesis. This is Elongation factor Tu 2 from Halorhodospira halophila (strain DSM 244 / SL1) (Ectothiorhodospira halophila (strain DSM 244 / SL1)).